The sequence spans 297 residues: Phosphoribosylaminoimidazole-succinocarboxamide synthase (297 aa).

Belongs to the SAICAR synthetase family.

It catalyses the reaction 5-amino-1-(5-phospho-D-ribosyl)imidazole-4-carboxylate + L-aspartate + ATP = (2S)-2-[5-amino-1-(5-phospho-beta-D-ribosyl)imidazole-4-carboxamido]succinate + ADP + phosphate + 2 H(+). The protein operates within purine metabolism; IMP biosynthesis via de novo pathway; 5-amino-1-(5-phospho-D-ribosyl)imidazole-4-carboxamide from 5-amino-1-(5-phospho-D-ribosyl)imidazole-4-carboxylate: step 1/2. In Corynebacterium urealyticum (strain ATCC 43042 / DSM 7109), this protein is Phosphoribosylaminoimidazole-succinocarboxamide synthase.